An 855-amino-acid chain; its full sequence is Lon protease (855 aa).

The 244-residue stretch at 45 to 288 (IYLLTVKNVV…ETFRFLNIEY (244 aa)) folds into the Lon N-terminal domain. 439-446 (GPPGVGKT) is a binding site for ATP. Residues 674 to 855 (IQVPGVVTGL…NEVIDLSIIK (182 aa)) enclose the Lon proteolytic domain. Catalysis depends on residues serine 761 and lysine 804.

This sequence belongs to the peptidase S16 family. As to quaternary structure, homohexamer. Organized in a ring with a central cavity.

The protein localises to the cytoplasm. It carries out the reaction Hydrolysis of proteins in presence of ATP.. Functionally, ATP-dependent serine protease that mediates the selective degradation of mutant and abnormal proteins as well as certain short-lived regulatory proteins. Required for cellular homeostasis and for survival from DNA damage and developmental changes induced by stress. Degrades polypeptides processively to yield small peptide fragments that are 5 to 10 amino acids long. Binds to DNA in a double-stranded, site-specific manner. In Karelsulcia muelleri (strain GWSS) (Sulcia muelleri), this protein is Lon protease.